We begin with the raw amino-acid sequence, 199 residues long: N-(5'-phosphoribosyl)anthranilate isomerase (199 aa).

The protein belongs to the TrpF family.

It carries out the reaction N-(5-phospho-beta-D-ribosyl)anthranilate = 1-(2-carboxyphenylamino)-1-deoxy-D-ribulose 5-phosphate. It functions in the pathway amino-acid biosynthesis; L-tryptophan biosynthesis; L-tryptophan from chorismate: step 3/5. This Lacticaseibacillus casei (strain BL23) (Lactobacillus casei) protein is N-(5'-phosphoribosyl)anthranilate isomerase.